The sequence spans 71 residues: Defensin-like protein 292 (71 aa).

Cystine bridges form between cysteine 44–cysteine 64, cysteine 50–cysteine 69, and cysteine 56–cysteine 71.

This sequence belongs to the DEFL family.

This is Defensin-like protein 292 from Arabidopsis thaliana (Mouse-ear cress).